Reading from the N-terminus, the 81-residue chain is Exodeoxyribonuclease 7 small subunit (81 aa).

Belongs to the XseB family. As to quaternary structure, heterooligomer composed of large and small subunits.

The protein resides in the cytoplasm. The enzyme catalyses Exonucleolytic cleavage in either 5'- to 3'- or 3'- to 5'-direction to yield nucleoside 5'-phosphates.. Its function is as follows. Bidirectionally degrades single-stranded DNA into large acid-insoluble oligonucleotides, which are then degraded further into small acid-soluble oligonucleotides. This chain is Exodeoxyribonuclease 7 small subunit, found in Nitratidesulfovibrio vulgaris (strain ATCC 29579 / DSM 644 / CCUG 34227 / NCIMB 8303 / VKM B-1760 / Hildenborough) (Desulfovibrio vulgaris).